The following is an 86-amino-acid chain: Large ribosomal subunit protein bL31B (86 aa).

Belongs to the bacterial ribosomal protein bL31 family. Type B subfamily. In terms of assembly, part of the 50S ribosomal subunit.

In Burkholderia lata (strain ATCC 17760 / DSM 23089 / LMG 22485 / NCIMB 9086 / R18194 / 383), this protein is Large ribosomal subunit protein bL31B.